Consider the following 394-residue polypeptide: Actin-related protein 2 (394 aa).

Residue methionine 1 is modified to N-acetylmethionine. Residues 160-162 (GDG) and 214-218 (RMIKE) each bind ATP. Position 299 is an N6-acetyllysine (lysine 299). Residue 305–310 (GGSTMY) participates in ATP binding. Position 322 is an N6-acetyllysine (lysine 322).

It belongs to the actin family. ARP2 subfamily. In terms of assembly, component of the Arp2/3 complex composed of ACTR2/ARP2, ACTR3/ARP3, ARPC1B/p41-ARC, ARPC2/p34-ARC, ARPC3/p21-ARC, ARPC4/p20-ARC and ARPC5/p16-ARC. Interacts with AVIL.

It localises to the cytoplasm. The protein resides in the cytoskeleton. Its subcellular location is the cell projection. The protein localises to the nucleus. In terms of biological role, ATP-binding component of the Arp2/3 complex, a multiprotein complex that mediates actin polymerization upon stimulation by nucleation-promoting factor (NPF). The Arp2/3 complex mediates the formation of branched actin networks in the cytoplasm, providing the force for cell motility. Seems to contact the pointed end of the daughter actin filament. In podocytes, required for the formation of lamellipodia downstream of AVIL and PLCE1 regulation. In addition to its role in the cytoplasmic cytoskeleton, the Arp2/3 complex also promotes actin polymerization in the nucleus, thereby regulating gene transcription and repair of damaged DNA. The Arp2/3 complex promotes homologous recombination (HR) repair in response to DNA damage by promoting nuclear actin polymerization, leading to drive motility of double-strand breaks (DSBs). The chain is Actin-related protein 2 (ACTR2) from Bos taurus (Bovine).